The primary structure comprises 398 residues: Chorismate synthase (398 aa).

The NADP(+) site is built by R44 and R50. Residues 133–135, 261–262, G306, 321–325, and R347 each bind FMN; these read RAS, QA, and KPIPT.

This sequence belongs to the chorismate synthase family. In terms of assembly, homotetramer. The cofactor is FMNH2.

It carries out the reaction 5-O-(1-carboxyvinyl)-3-phosphoshikimate = chorismate + phosphate. Its pathway is metabolic intermediate biosynthesis; chorismate biosynthesis; chorismate from D-erythrose 4-phosphate and phosphoenolpyruvate: step 7/7. In terms of biological role, catalyzes the anti-1,4-elimination of the C-3 phosphate and the C-6 proR hydrogen from 5-enolpyruvylshikimate-3-phosphate (EPSP) to yield chorismate, which is the branch point compound that serves as the starting substrate for the three terminal pathways of aromatic amino acid biosynthesis. This reaction introduces a second double bond into the aromatic ring system. This Aquifex aeolicus (strain VF5) protein is Chorismate synthase.